The primary structure comprises 583 residues: CD166 antigen (583 aa).

Residues 1–27 (MASKVSPSCRLVFCLLISAAVLRPGLG) form the signal peptide. Ig-like V-type domains are found at residues 28 to 120 (WYTV…TEDN) and 125 to 234 (PTLV…KTIY). Topologically, residues 28–527 (WYTVNSAYGD…NREKVNDQAK (500 aa)) are extracellular. Disulfide bonds link cysteine 43–cysteine 113 and cysteine 157–cysteine 220. Residues asparagine 95, asparagine 167, asparagine 265, asparagine 306, asparagine 361, asparagine 457, asparagine 480, and asparagine 499 are each glycosylated (N-linked (GlcNAc...) asparagine). Ig-like C2-type domains are found at residues 245-328 (PTEQ…TTIT), 333-409 (DLSL…ESLT), and 416-501 (PQIK…LNVS). Disulfide bonds link cysteine 270–cysteine 313, cysteine 354–cysteine 392, and cysteine 435–cysteine 485. Residues 528-549 (LIVGIVVGLLLAALVAGVVYWL) form a helical membrane-spanning segment. The Cytoplasmic segment spans residues 550-583 (YMKKSKTASKHVNKDLGNMEENKKLEENNHKTEA). The interval 562–583 (NKDLGNMEENKKLEENNHKTEA) is disordered. A compositionally biased stretch (basic and acidic residues) spans 569-583 (EENKKLEENNHKTEA).

Homodimer. Interacts (via extracellular domain) with CD6 (via extracellular domain). Homodimerization and interaction with CD6 involve the same region and cannot occur simultaneously. The affinity for CD6 is much higher than the affinity for self-association. Interacts (via glycosylated extracellular domain) with LGALS1 and LGALS3. Interaction with LGALS1 or LGALS3 inhibits interaction with CD6. In terms of processing, glycosylated. As to expression, detected on brain motor neurons, in differentiating retinal ganglion cells and in adult retina. Detected on leukocytes and on lymphatic endothelial cells. Detected in spleen B cells and T-cells (at protein level). Detected in adult brain and embryonic spinal cord. Expressed at high levels in the brain, and lung, and at lower levels in the liver, and the kidney, as well as by activated leukocytes.

It localises to the cell membrane. It is found in the cell projection. Its subcellular location is the axon. The protein resides in the dendrite. Its function is as follows. Cell adhesion molecule that mediates both heterotypic cell-cell contacts via its interaction with CD6, as well as homotypic cell-cell contacts. Promotes T-cell activation and proliferation via its interactions with CD6. Contributes to the formation and maturation of the immunological synapse via its interactions with CD6. Mediates homotypic interactions with cells that express ALCAM. Mediates attachment of dendritic cells onto endothelial cells via homotypic interaction. Inhibits endothelial cell migration and promotes endothelial tube formation via homotypic interactions. Required for normal organization of the lymph vessel network. Required for normal hematopoietic stem cell engraftment in the bone marrow. Plays a role in hematopoiesis; required for normal numbers of hematopoietic stem cells in bone marrow. Promotes in vitro osteoblast proliferation and differentiation. Promotes neurite extension, axon growth and axon guidance; axons grow preferentially on surfaces that contain ALCAM. Mediates outgrowth and pathfinding for retinal ganglion cell axons. In Mus musculus (Mouse), this protein is CD166 antigen (Alcam).